We begin with the raw amino-acid sequence, 308 residues long: Porphobilinogen deaminase (308 aa).

Cys-241 carries the post-translational modification S-(dipyrrolylmethanemethyl)cysteine.

It belongs to the HMBS family. Monomer. Dipyrromethane is required as a cofactor.

It catalyses the reaction 4 porphobilinogen + H2O = hydroxymethylbilane + 4 NH4(+). It functions in the pathway porphyrin-containing compound metabolism; protoporphyrin-IX biosynthesis; coproporphyrinogen-III from 5-aminolevulinate: step 2/4. Its function is as follows. Tetrapolymerization of the monopyrrole PBG into the hydroxymethylbilane pre-uroporphyrinogen in several discrete steps. In Exiguobacterium sibiricum (strain DSM 17290 / CCUG 55495 / CIP 109462 / JCM 13490 / 255-15), this protein is Porphobilinogen deaminase.